We begin with the raw amino-acid sequence, 139 residues long: uncharacterized protein (139 aa).

This is an uncharacterized protein from Homo sapiens (Human).